The following is a 23-amino-acid chain: PNIQTKIIEQIWKEHIFQGTVVK.

This sequence belongs to the aldehyde dehydrogenase family. In terms of assembly, homotetramer.

It catalyses the reaction benzaldehyde + NAD(+) + H2O = benzoate + NADH + 2 H(+). This Acinetobacter guillouiae (Acinetobacter genomosp. 11) protein is Benzaldehyde dehydrogenase [NAD(+)] I.